Here is a 306-residue protein sequence, read N- to C-terminus: MSSTAPLDSKATEQITTAAESKHNETQATRRKRYREAQEQTRNKHLRFQASPTPEEASPELPSDEVAKLPQKRFYRQRAHSNPFSDHNLEYPVLPSQMDWSTIYPHYTPASLRKVEIADIGCGFGGLLIDLGPQFPESLILGMEIRVQVTNYVQDRLIALREIHKADAYNYDNLGVIRGNAMKFLPNFFTKGQLSKMFFCFPDPHFKQRKHKARIITNTLLSEYAYVLREGGVVYTITDVEDLHNWMVKHLDEHPLFERLSKEWEEQDPCVKIMYNSTEEGQKVARNQGSKYVACYKRLPNPDDCE.

Polar residues predominate over residues M1–A19. Residues M1–E65 form a disordered region. S-adenosyl-L-methionine is bound by residues G121, E144–I145, N180–A181, and C200. D203 is an active-site residue. Residue T278–E280 participates in S-adenosyl-L-methionine binding.

This sequence belongs to the class I-like SAM-binding methyltransferase superfamily. TrmB family. Forms a complex with TRM82.

The protein resides in the nucleus. The catalysed reaction is guanosine(46) in tRNA + S-adenosyl-L-methionine = N(7)-methylguanosine(46) in tRNA + S-adenosyl-L-homocysteine. It participates in tRNA modification; N(7)-methylguanine-tRNA biosynthesis. Its function is as follows. Catalyzes the formation of N(7)-methylguanine at position 46 (m7G46) in tRNA. The polypeptide is tRNA (guanine-N(7)-)-methyltransferase (Lodderomyces elongisporus (strain ATCC 11503 / CBS 2605 / JCM 1781 / NBRC 1676 / NRRL YB-4239) (Yeast)).